The chain runs to 754 residues: DNA repair protein RAD4 (754 aa).

The interval 23–51 (EKAPLSRRRRVRRKNQPLPDAKKKFKTGL) is disordered. Positions 27 to 37 (LSRRRRVRRKN) are enriched in basic residues. Residues 250 to 269 (DFLRAVSKGHGDPDISVQGF) mediate DNA binding. Residues 701–754 (IANHEARPYSEPSEPEDSLDYVSVDKAEESATDDDVGEDYSDFMKELEMSEESD) form a disordered region. Over residues 730–741 (SATDDDVGEDYS) the composition is skewed to acidic residues.

The protein belongs to the XPC family.

The protein localises to the cytoplasm. The protein resides in the nucleus. Its function is as follows. Involved in nucleotide excision repair of DNA damaged with UV light, bulky adducts, or cross-linking agents. The protein is DNA repair protein RAD4 (RAD4) of Saccharomyces cerevisiae (strain ATCC 204508 / S288c) (Baker's yeast).